The sequence spans 565 residues: Periplasmic trehalase (565 aa).

A signal peptide spans 1-30 (MKSPAPSRPQKMALIPACIFLCFAALSVQA). Residues R152, 159–160 (WD), N196, 205–207 (RSQ), 277–279 (RPE), and G310 each bind substrate. Active-site proton donor/acceptor residues include D312 and E496. E511 provides a ligand contact to substrate. The segment at 538–565 (PCDNVPATRPTVKSATTQPSTKEAQPTP) is disordered. Positions 548-565 (TVKSATTQPSTKEAQPTP) are enriched in polar residues.

Belongs to the glycosyl hydrolase 37 family. As to quaternary structure, monomer.

The protein localises to the periplasm. The catalysed reaction is alpha,alpha-trehalose + H2O = alpha-D-glucose + beta-D-glucose. Its function is as follows. Provides the cells with the ability to utilize trehalose at high osmolarity by splitting it into glucose molecules that can subsequently be taken up by the phosphotransferase-mediated uptake system. This chain is Periplasmic trehalase, found in Escherichia coli O139:H28 (strain E24377A / ETEC).